The primary structure comprises 1145 residues: Error-prone DNA polymerase (1145 aa).

This sequence belongs to the DNA polymerase type-C family. DnaE2 subfamily.

It is found in the cytoplasm. The catalysed reaction is DNA(n) + a 2'-deoxyribonucleoside 5'-triphosphate = DNA(n+1) + diphosphate. In terms of biological role, DNA polymerase involved in damage-induced mutagenesis and translesion synthesis (TLS). It is not the major replicative DNA polymerase. This is Error-prone DNA polymerase from Rhodopirellula baltica (strain DSM 10527 / NCIMB 13988 / SH1).